We begin with the raw amino-acid sequence, 162 residues long: Interleukin-15 (162 aa).

The signal sequence occupies residues 1–29; sequence MKILKPYMRNTSISCYLCFLLNSHFLTEA. A propeptide spanning residues 30–48 is cleaved from the precursor; that stretch reads GIHVFILGCVSVGLPKTEA. 2 disulfide bridges follow: Cys83/Cys133 and Cys90/Cys136. N-linked (GlcNAc...) asparagine glycans are attached at residues Asn104, Asn108, and Asn119.

It belongs to the IL-15/IL-21 family.

The protein localises to the secreted. In terms of biological role, cytokine that plays a major role in the development of inflammatory and protective immune responses to microbial invaders and parasites by modulating immune cells of both the innate and adaptive immune systems. Stimulates the proliferation and activation of natural killer cells, T-cells and B-cells and promotes the secretion of several cytokines. In monocytes, induces the production of IL8 and monocyte chemotactic protein 1/CCL2, two chemokines that attract neutrophils and monocytes respectively to sites of infection. Unlike most cytokines, which are secreted in soluble form, IL15 is expressed in association with its high affinity IL15RA on the surface of IL15-producing cells and delivers signals to target cells that express IL2RB and IL2RG receptor subunits. Binding to its receptor triggers the phosphorylation of JAK1 and JAK3 and the recruitment and subsequent phosphorylation of signal transducer and activator of transcription-3/STAT3 and STAT5. In mast cells, induces the rapid tyrosine phosphorylation of STAT6 and thereby controls mast cell survival and release of cytokines such as IL4. The protein is Interleukin-15 (Il15) of Mus musculus (Mouse).